A 610-amino-acid chain; its full sequence is Glutamine--fructose-6-phosphate aminotransferase [isomerizing] (610 aa).

Residue C2 is the Nucleophile; for GATase activity of the active site. Residues 2–218 enclose the Glutamine amidotransferase type-2 domain; sequence CGIVGAVAQR…EGDVAEITRR (217 aa). SIS domains are found at residues 286–426 and 459–600; these read AAEI…QQGR and LATD…VDQP. K605 serves as the catalytic For Fru-6P isomerization activity.

In terms of assembly, homodimer.

Its subcellular location is the cytoplasm. It catalyses the reaction D-fructose 6-phosphate + L-glutamine = D-glucosamine 6-phosphate + L-glutamate. Its function is as follows. Catalyzes the first step in hexosamine metabolism, converting fructose-6P into glucosamine-6P using glutamine as a nitrogen source. The polypeptide is Glutamine--fructose-6-phosphate aminotransferase [isomerizing] (Vibrio vulnificus (strain CMCP6)).